We begin with the raw amino-acid sequence, 186 residues long: uncharacterized protein (186 aa).

This is an uncharacterized protein from Acanthamoeba polyphaga mimivirus (APMV).